The chain runs to 585 residues: Probable phosphoglucomutase, cytoplasmic 2 (585 aa).

A disordered region spans residues 1–20; the sequence is MVSFKVSLVSTSPIDGQKPG. Arg-25 and Ser-124 together coordinate alpha-D-glucose 1,6-bisphosphate. Ser-124 functions as the Phosphoserine intermediate in the catalytic mechanism. The Mg(2+) site is built by Ser-124, Asp-301, Asp-303, and Asp-305. Ser-124 bears the Phosphoserine mark. Alpha-D-glucose 1,6-bisphosphate-binding residues include Asp-305, Arg-306, Thr-369, Glu-388, Ser-390, and Lys-401.

The protein belongs to the phosphohexose mutase family. Monomer. Requires Mg(2+) as cofactor.

It localises to the cytoplasm. It catalyses the reaction alpha-D-glucose 1-phosphate = alpha-D-glucose 6-phosphate. It carries out the reaction O-phospho-L-seryl-[protein] + alpha-D-glucose 1-phosphate = alpha-D-glucose 1,6-bisphosphate + L-seryl-[protein]. The enzyme catalyses alpha-D-glucose 1,6-bisphosphate + L-seryl-[protein] = O-phospho-L-seryl-[protein] + alpha-D-glucose 6-phosphate. Functionally, catalyzes the reversible isomerization of alpha-D-glucose 1-phosphate to alpha-D-glucose 6-phosphate. The mechanism proceeds via the intermediate compound alpha-D-glucose 1,6-bisphosphate. This enzyme participates in both the breakdown and synthesis of glucose. The protein is Probable phosphoglucomutase, cytoplasmic 2 of Arabidopsis thaliana (Mouse-ear cress).